Reading from the N-terminus, the 688-residue chain is Elongation factor G (688 aa).

The region spanning 8-282 (DKFRNFGIMA…GVVDYLPSPL (275 aa)) is the tr-type G domain. Residues 17-24 (AHIDAGKT), 81-85 (DTPGH), and 135-138 (NKMD) each bind GTP.

It belongs to the TRAFAC class translation factor GTPase superfamily. Classic translation factor GTPase family. EF-G/EF-2 subfamily.

It localises to the cytoplasm. In terms of biological role, catalyzes the GTP-dependent ribosomal translocation step during translation elongation. During this step, the ribosome changes from the pre-translocational (PRE) to the post-translocational (POST) state as the newly formed A-site-bound peptidyl-tRNA and P-site-bound deacylated tRNA move to the P and E sites, respectively. Catalyzes the coordinated movement of the two tRNA molecules, the mRNA and conformational changes in the ribosome. The protein is Elongation factor G of Clostridium botulinum (strain Alaska E43 / Type E3).